The chain runs to 528 residues: Cytochrome P450 monooxygenase vrcB (528 aa).

Residues 5-27 (YGLFFAAVALYSVALVIYRLYLH) form a helical membrane-spanning segment. C470 serves as a coordination point for heme.

Belongs to the cytochrome P450 family. It depends on heme as a cofactor.

It is found in the membrane. It catalyses the reaction variecoladiene + 4 reduced [NADPH--hemoprotein reductase] + 4 O2 = variecolin + 4 oxidized [NADPH--hemoprotein reductase] + 6 H2O + 4 H(+). It participates in secondary metabolite biosynthesis; terpenoid biosynthesis. Functionally, cytochrome P450 monooxygenase; part of the gene cluster that mediates the biosynthesis of the sesterterpene variecolin. The first step in the pathway is performed by the variecoladiene synthase vrcA that possesses both prenyl transferase and terpene cyclase activity, converting isopentenyl diphosphate and dimethylallyl diphosphate into geranylfarnesyl pyrophosphate (GFPP) and then converting GFPP into the tetracyclic variecoladiene. The cytochrome P450 monooxygenase vrcB then catalyzes multiple oxidations at C-5 and C-20 positions to yield variecolin. The sequence is that of Cytochrome P450 monooxygenase vrcB from Aspergillus aculeatus (strain ATCC 16872 / CBS 172.66 / WB 5094).